A 148-amino-acid polypeptide reads, in one-letter code: Glutamyl-tRNA(Gln) amidotransferase subunit C, mitochondrial (148 aa).

It belongs to the GatC family. In terms of assembly, subunit of the heterotrimeric GatCAB amidotransferase (AdT) complex, composed of A, B and C subunits.

The protein localises to the mitochondrion. It carries out the reaction L-glutamyl-tRNA(Gln) + L-glutamine + ATP + H2O = L-glutaminyl-tRNA(Gln) + L-glutamate + ADP + phosphate + H(+). Functionally, allows the formation of correctly charged Gln-tRNA(Gln) through the transamidation of misacylated Glu-tRNA(Gln) in the mitochondria. The reaction takes place in the presence of glutamine and ATP through an activated gamma-phospho-Glu-tRNA(Gln). The polypeptide is Glutamyl-tRNA(Gln) amidotransferase subunit C, mitochondrial (Drosophila sechellia (Fruit fly)).